The chain runs to 369 residues: Anhydro-N-acetylmuramic acid kinase (369 aa).

ATP is bound at residue 11 to 18 (GTSMDAVD).

It belongs to the anhydro-N-acetylmuramic acid kinase family.

It catalyses the reaction 1,6-anhydro-N-acetyl-beta-muramate + ATP + H2O = N-acetyl-D-muramate 6-phosphate + ADP + H(+). The protein operates within amino-sugar metabolism; 1,6-anhydro-N-acetylmuramate degradation. It functions in the pathway cell wall biogenesis; peptidoglycan recycling. Functionally, catalyzes the specific phosphorylation of 1,6-anhydro-N-acetylmuramic acid (anhMurNAc) with the simultaneous cleavage of the 1,6-anhydro ring, generating MurNAc-6-P. Is required for the utilization of anhMurNAc either imported from the medium or derived from its own cell wall murein, and thus plays a role in cell wall recycling. The chain is Anhydro-N-acetylmuramic acid kinase from Idiomarina loihiensis (strain ATCC BAA-735 / DSM 15497 / L2-TR).